A 426-amino-acid polypeptide reads, in one-letter code: Glutamate-1-semialdehyde 2,1-aminomutase (426 aa).

The residue at position 265 (Lys-265) is an N6-(pyridoxal phosphate)lysine.

This sequence belongs to the class-III pyridoxal-phosphate-dependent aminotransferase family. HemL subfamily. In terms of assembly, homodimer. Requires pyridoxal 5'-phosphate as cofactor.

It localises to the cytoplasm. The catalysed reaction is (S)-4-amino-5-oxopentanoate = 5-aminolevulinate. It participates in porphyrin-containing compound metabolism; protoporphyrin-IX biosynthesis; 5-aminolevulinate from L-glutamyl-tRNA(Glu): step 2/2. The sequence is that of Glutamate-1-semialdehyde 2,1-aminomutase from Salmonella paratyphi A (strain ATCC 9150 / SARB42).